We begin with the raw amino-acid sequence, 194 residues long: ATP-dependent Clp protease proteolytic subunit (194 aa).

Residue S98 is the Nucleophile of the active site. Residue H123 is part of the active site.

This sequence belongs to the peptidase S14 family. As to quaternary structure, fourteen ClpP subunits assemble into 2 heptameric rings which stack back to back to give a disk-like structure with a central cavity, resembling the structure of eukaryotic proteasomes.

It localises to the cytoplasm. The catalysed reaction is Hydrolysis of proteins to small peptides in the presence of ATP and magnesium. alpha-casein is the usual test substrate. In the absence of ATP, only oligopeptides shorter than five residues are hydrolyzed (such as succinyl-Leu-Tyr-|-NHMec, and Leu-Tyr-Leu-|-Tyr-Trp, in which cleavage of the -Tyr-|-Leu- and -Tyr-|-Trp bonds also occurs).. Cleaves peptides in various proteins in a process that requires ATP hydrolysis. Has a chymotrypsin-like activity. Plays a major role in the degradation of misfolded proteins. This Alkaliphilus metalliredigens (strain QYMF) protein is ATP-dependent Clp protease proteolytic subunit.